We begin with the raw amino-acid sequence, 826 residues long: Capsid-associated protein Vp91 (826 aa).

Residues 1–18 (MSDVVLLVLAIIFIIIFV) form the signal peptide. A C2HC BV-type zinc finger spans residues 147 to 196 (CVPINPCDTRAPGLYAMDEHLLDALVHSQHLDKDYTINAHLQHPTLYLRC). 2 cysteine pairs are disulfide-bonded: Cys-207–Cys-220 and Cys-260–Cys-273. An N-linked (GlcNAc...) asparagine; by host glycan is attached at Asn-210. Residues 223–281 (NELCQGRPDGYVLDYFPETLLVNEFVECYESKHVVKQCPEQHVFDRQLMTCVQAHPCAF) form the Chitin-binding type-2 domain. Residues Asn-333, Asn-371, Asn-413, Asn-510, Asn-520, and Asn-609 are each glycosylated (N-linked (GlcNAc...) asparagine; by host). The segment at 651–679 (GDGDHWGPDLPPPVQPDSEPDESEPEPEV) is disordered. The span at 668-677 (SEPDESEPEP) shows a compositional bias: acidic residues. A glycan (N-linked (GlcNAc...) asparagine; by host) is linked at Asn-722.

The protein localises to the virion. Functionally, probable capsid-associated protein. The protein is Capsid-associated protein Vp91 of Epiphyas postvittana nucleopolyhedrovirus (EppoMNPV).